The following is a 392-amino-acid chain: Protein-glutamate methylesterase/protein-glutamine glutaminase (392 aa).

Residues 9–126 (TVLIVDDSPF…GADIQALARD (118 aa)) form the Response regulatory domain. D60 carries the 4-aspartylphosphate modification. The interval 148–194 (VSRISSASGSRPPWTAGAASENTNRLSSPGSTSSTLGSAKGRSLDSG) is disordered. The segment covering 173 to 185 (LSSPGSTSSTLGS) has biased composition (low complexity). Residues 198 to 392 (PKYPVEIVAI…RHIVECVQRR (195 aa)) enclose the CheB-type methylesterase domain. Residues S210, H237, and D334 contribute to the active site.

It belongs to the CheB family. In terms of processing, phosphorylated by CheA. Phosphorylation of the N-terminal regulatory domain activates the methylesterase activity.

The protein resides in the cytoplasm. The catalysed reaction is [protein]-L-glutamate 5-O-methyl ester + H2O = L-glutamyl-[protein] + methanol + H(+). The enzyme catalyses L-glutaminyl-[protein] + H2O = L-glutamyl-[protein] + NH4(+). Involved in chemotaxis. Part of a chemotaxis signal transduction system that modulates chemotaxis in response to various stimuli. Catalyzes the demethylation of specific methylglutamate residues introduced into the chemoreceptors (methyl-accepting chemotaxis proteins or MCP) by CheR. Also mediates the irreversible deamidation of specific glutamine residues to glutamic acid. This is Protein-glutamate methylesterase/protein-glutamine glutaminase from Desulfitobacterium hafniense (strain Y51).